A 239-amino-acid chain; its full sequence is Ribosomal RNA small subunit methyltransferase G (239 aa).

Residues G77, F82, 128 to 129 (AE), and R146 each bind S-adenosyl-L-methionine. Residues 214 to 239 (IDKKRQTPKKYPRKPGTPNKTPLLEK) are disordered.

Belongs to the methyltransferase superfamily. RNA methyltransferase RsmG family.

It localises to the cytoplasm. Specifically methylates the N7 position of guanine in position 535 of 16S rRNA. The sequence is that of Ribosomal RNA small subunit methyltransferase G from Staphylococcus aureus (strain Mu3 / ATCC 700698).